We begin with the raw amino-acid sequence, 282 residues long: MKDPDPSQVYRPDMDPEAAKDKGSFRNYTSGPLLDRVFRTYKLMHTWQTVDFVRKKHAQFGGFSYKRMTVLEAVDMLDGLVDESDPDVDFPNSFHAFQTAEGIRKAHPDKDWFHLVGLLHDLGKVLVLAGEPQWAVVGDTFPVGCRPQASVVFCDSTFQDNPDLQDPVYSTELGMYQPHCGLENALMSWGHDEYMYQMMKFNKFSLPGEAFYIIRFHSFYPWHTGGDYRQLCNEQDLAMLPWVQEFNKFDLYTKGSDMPDVDELRPYYQGLIDKYCPGVLCW.

The interval 1 to 25 (MKDPDPSQVYRPDMDPEAAKDKGSF) is disordered. Positions 12-24 (PDMDPEAAKDKGS) are enriched in basic and acidic residues. Residue Arg26 coordinates substrate. The residue at position 30 (Ser30) is a Phosphoserine. Substrate is bound at residue 82–84 (DES). Fe cation contacts are provided by His95, His120, and Asp121. Substrate-binding positions include Lys124 and 138–139 (GD). Fe cation is bound by residues His191, His217, and Asp250. Position 217–218 (217–218 (HS)) interacts with substrate.

This sequence belongs to the myo-inositol oxygenase family. The cofactor is Fe cation. In terms of processing, the N-terminus is blocked. In terms of tissue distribution, kidney specific.

It localises to the cytoplasm. It catalyses the reaction myo-inositol + O2 = D-glucuronate + H2O + H(+). Its pathway is polyol metabolism; myo-inositol degradation into D-glucuronate; D-glucuronate from myo-inositol: step 1/1. In Sus scrofa (Pig), this protein is Inositol oxygenase (MIOX).